The chain runs to 493 residues: Cysteine--tRNA ligase (493 aa).

Position 31 (Cys31) interacts with Zn(2+). The short motif at 33 to 43 is the 'HIGH' region element; sequence PTVYGDAHLGH. Zn(2+) contacts are provided by Cys226, His251, and Glu255. A 'KMSKS' region motif is present at residues 283 to 287; the sequence is KMGKS. ATP is bound at residue Lys286.

Belongs to the class-I aminoacyl-tRNA synthetase family. Monomer. Zn(2+) is required as a cofactor.

It is found in the cytoplasm. The catalysed reaction is tRNA(Cys) + L-cysteine + ATP = L-cysteinyl-tRNA(Cys) + AMP + diphosphate. In Bacteroides thetaiotaomicron (strain ATCC 29148 / DSM 2079 / JCM 5827 / CCUG 10774 / NCTC 10582 / VPI-5482 / E50), this protein is Cysteine--tRNA ligase.